The sequence spans 253 residues: Vitamin B12 import ATP-binding protein BtuD (253 aa).

Positions 3 to 237 (LDAKNLAMPP…EQLESTFATQ (235 aa)) constitute an ABC transporter domain. 31-38 (GPNGSGKS) serves as a coordination point for ATP.

This sequence belongs to the ABC transporter superfamily. Vitamin B12 importer (TC 3.A.1.13.1) family. In terms of assembly, the complex is composed of two ATP-binding proteins (BtuD), two transmembrane proteins (BtuC) and a solute-binding protein (BtuF).

It localises to the cell inner membrane. It catalyses the reaction an R-cob(III)alamin(out) + ATP + H2O = an R-cob(III)alamin(in) + ADP + phosphate + H(+). Part of the ABC transporter complex BtuCDF involved in vitamin B12 import. Responsible for energy coupling to the transport system. In Photobacterium profundum (strain SS9), this protein is Vitamin B12 import ATP-binding protein BtuD.